Here is a 507-residue protein sequence, read N- to C-terminus: tRNA-2-methylthio-N(6)-dimethylallyladenosine synthase (507 aa).

The MTTase N-terminal domain maps to 13 to 129 (RTYQVRTYGC…LPALLERARH (117 aa)). [4Fe-4S] cluster is bound by residues Cys-22, Cys-58, Cys-92, Cys-166, Cys-170, and Cys-173. The region spanning 152–388 (RESAYAAWVS…IALQESVTLE (237 aa)) is the Radical SAM core domain. The TRAM domain occupies 391-462 (QKQIGRMIEV…PHHLIADDGV (72 aa)). Basic and acidic residues predominate over residues 459–478 (DDGVRSHRRTRAGDAHEAGK). Positions 459-492 (DDGVRSHRRTRAGDAHEAGKKPSTPGIGLGMPAI) are disordered.

This sequence belongs to the methylthiotransferase family. MiaB subfamily. In terms of assembly, monomer. Requires [4Fe-4S] cluster as cofactor.

The protein localises to the cytoplasm. It carries out the reaction N(6)-dimethylallyladenosine(37) in tRNA + (sulfur carrier)-SH + AH2 + 2 S-adenosyl-L-methionine = 2-methylsulfanyl-N(6)-dimethylallyladenosine(37) in tRNA + (sulfur carrier)-H + 5'-deoxyadenosine + L-methionine + A + S-adenosyl-L-homocysteine + 2 H(+). Its function is as follows. Catalyzes the methylthiolation of N6-(dimethylallyl)adenosine (i(6)A), leading to the formation of 2-methylthio-N6-(dimethylallyl)adenosine (ms(2)i(6)A) at position 37 in tRNAs that read codons beginning with uridine. The chain is tRNA-2-methylthio-N(6)-dimethylallyladenosine synthase from Mycobacteroides abscessus (strain ATCC 19977 / DSM 44196 / CCUG 20993 / CIP 104536 / JCM 13569 / NCTC 13031 / TMC 1543 / L948) (Mycobacterium abscessus).